A 297-amino-acid chain; its full sequence is Cyclin-dependent kinase 1 (297 aa).

N-acetylmethionine is present on Met1. Residue Tyr4 is modified to Phosphotyrosine; by PKR. The Protein kinase domain occupies 4 to 287 (YIKIEKIGEG…GKMALKHPYF (284 aa)). An N6-acetyllysine; alternate mark is found at Lys6 and Lys9. Residues Lys6 and Lys9 each participate in a glycyl lysine isopeptide (Lys-Gly) (interchain with G-Cter in SUMO2); alternate cross-link. 10–18 (IGEGTYGVV) contributes to the ATP binding site. Phosphothreonine is present on Thr14. At Tyr15 the chain carries Phosphotyrosine; by PKMYT1, WEE1, WEE2 and PKC/PRKCD. Tyr15 carries the post-translational modification Phosphotyrosine; by WEE1 and WEE2. Tyr19 is subject to Phosphotyrosine. Lys20 participates in a covalent cross-link: Glycyl lysine isopeptide (Lys-Gly) (interchain with G-Cter in SUMO2). Lys33 is a binding site for ATP. Ser39 is modified (phosphoserine). Residue Tyr77 is modified to Phosphotyrosine. Residue Asp128 is the Proton acceptor of the active site. Lys139 participates in a covalent cross-link: Glycyl lysine isopeptide (Lys-Gly) (interchain with G-Cter in SUMO2). At Thr141 the chain carries Phosphothreonine. At Thr161 the chain carries Phosphothreonine; by CAK. Ser178 carries the phosphoserine modification. Thr222 is modified (phosphothreonine). At Lys245 the chain carries N6-succinyllysine. Ser248 carries the post-translational modification Phosphoserine.

Belongs to the protein kinase superfamily. CMGC Ser/Thr protein kinase family. CDC2/CDKX subfamily. In terms of assembly, forms a stable but non-covalent complex with a regulatory subunit and with a cyclin. Interacts with cyclins-B (CCNB1, CCNB2 and CCNB3) to form a serine/threonine kinase holoenzyme complex also known as maturation promoting factor (MPF). The cyclin subunit imparts substrate specificity to the complex. Can also form CDK1-cylin-D and CDK1-cyclin-E complexes that phosphorylate RB1 in vitro. Binds to RB1 and other transcription factors such as FOXO1 and RUNX2. Promotes G2-M transition when in complex with a cyclin-B. Interacts with DLGAP5. Binds to the CDK inhibitors CDKN1A/p21 and CDKN1B/p27. Isoform 2 is unable to complex with cyclin-B1 and also fails to bind to CDKN1A/p21. Interacts with catalytically active CCNB1 and RALBP1 during mitosis to form an endocytotic complex during interphase. Associates with cyclins-A and B1 during S-phase in regenerating hepatocytes. Interacts with FANCC. Interacts with CEP63; this interaction recruits CDK1 to centrosomes. Interacts with CENPA. Interacts with NR1D1. Interacts with proteasome subunit PSMA8; to participate in meiosis progression during spermatogenesis. In terms of processing, phosphorylation at Thr-161 by CAK/CDK7 activates kinase activity. Phosphorylation at Thr-14 and Tyr-15 by PKMYT1 prevents nuclear translocation. Phosphorylation at Tyr-15 by WEE1 and WEE2 inhibits the protein kinase activity and acts as a negative regulator of entry into mitosis (G2 to M transition). Phosphorylation by PKMYT1 and WEE1 takes place during mitosis to keep CDK1-cyclin-B complexes inactive until the end of G2. By the end of G2, PKMYT1 and WEE1 are inactivated, but CDC25A and CDC25B are activated. Dephosphorylation by active CDC25A and CDC25B at Thr-14 and Tyr-15, leads to CDK1 activation at the G2-M transition. Phosphorylation at Tyr-15 by WEE2 during oogenesis is required to maintain meiotic arrest in oocytes during the germinal vesicle (GV) stage, a long period of quiescence at dictyate prophase I, leading to prevent meiotic reentry. Phosphorylation by WEE2 is also required for metaphase II exit during egg activation to ensure exit from meiosis in oocytes and promote pronuclear formation. Phosphorylated at Tyr-4 by PKR/EIF2AK2 upon genotoxic stress. This phosphorylation triggers CDK1 polyubiquitination and subsequent proteolysis, thus leading to G2 arrest. In response to UV irradiation, phosphorylation at Tyr-15 by PRKCD activates the G2/M DNA damage checkpoint. Polyubiquitinated upon genotoxic stress.

The protein localises to the nucleus. It localises to the cytoplasm. It is found in the mitochondrion. The protein resides in the cytoskeleton. Its subcellular location is the microtubule organizing center. The protein localises to the centrosome. It localises to the spindle. It carries out the reaction L-seryl-[protein] + ATP = O-phospho-L-seryl-[protein] + ADP + H(+). The catalysed reaction is L-threonyl-[protein] + ATP = O-phospho-L-threonyl-[protein] + ADP + H(+). The enzyme catalyses [DNA-directed RNA polymerase] + ATP = phospho-[DNA-directed RNA polymerase] + ADP + H(+). Phosphorylation at Thr-14 or Tyr-15 inactivates the enzyme, while phosphorylation at Thr-161 activates it. Activated through a multistep process; binding to cyclin-B is required for relocation of cyclin-kinase complexes to the nucleus, activated by CAK/CDK7-mediated phosphorylation on Thr-161, and CDC25-mediated dephosphorylation of inhibitory phosphorylation on Thr-14 and Tyr-15. Activity is restricted during S-phase in an ATR-dependent manner to prevent premature entry into G2. Repressed by the CDK inhibitors CDKN1A/p21 and CDKN1B/p27 during the G1 phase and by CDKN1A/p21 at the G1-S checkpoint upon DNA damage. Transient activation by rapid and transient dephosphorylation at Tyr-15 triggered by TGFB1. Functionally, plays a key role in the control of the eukaryotic cell cycle by modulating the centrosome cycle as well as mitotic onset; promotes G2-M transition via association with multiple interphase cyclins. Phosphorylates PARVA/actopaxin, APC, AMPH, APC, BARD1, Bcl-xL/BCL2L1, BRCA2, CALD1, CASP8, CDC7, CDC20, CDC25A, CDC25C, CC2D1A, CENPA, CSNK2 proteins/CKII, FZR1/CDH1, CDK7, CEBPB, CHAMP1, DMD/dystrophin, EEF1 proteins/EF-1, EZH2, KIF11/EG5, EGFR, FANCG, FOS, GFAP, GOLGA2/GM130, GRASP1, UBE2A/hHR6A, HIST1H1 proteins/histone H1, HMGA1, HIVEP3/KRC, KAT5, LMNA, LMNB, LBR, MKI67, LATS1, MAP1B, MAP4, MARCKS, MCM2, MCM4, MKLP1, MLST8, MYB, NEFH, NFIC, NPC/nuclear pore complex, PITPNM1/NIR2, NPM1, NCL, NUCKS1, NPM1/numatrin, ORC1, PRKAR2A, EEF1E1/p18, EIF3F/p47, p53/TP53, NONO/p54NRB, PAPOLA, PLEC/plectin, RB1, TPPP, UL40/R2, RAB4A, RAP1GAP, RBBP8/CtIP, RCC1, RPS6KB1/S6K1, KHDRBS1/SAM68, ESPL1, SKI, BIRC5/survivin, STIP1, TEX14, beta-tubulins, MAPT/TAU, NEDD1, VIM/vimentin, TK1, FOXO1, RUNX1/AML1, SAMHD1, SIRT2, CGAS, ZAR1 and RUNX2. CDK1/CDC2-cyclin-B controls pronuclear union in interphase fertilized eggs. Essential for early stages of embryonic development. During G2 and early mitosis, CDC25A/B/C-mediated dephosphorylation activates CDK1/cyclin complexes which phosphorylate several substrates that trigger at least centrosome separation, Golgi dynamics, nuclear envelope breakdown and chromosome condensation. Once chromosomes are condensed and aligned at the metaphase plate, CDK1 activity is switched off by WEE1- and PKMYT1-mediated phosphorylation to allow sister chromatid separation, chromosome decondensation, reformation of the nuclear envelope and cytokinesis. Phosphorylates KRT5 during prometaphase and metaphase. Inactivated by PKR/EIF2AK2- and WEE1-mediated phosphorylation upon DNA damage to stop cell cycle and genome replication at the G2 checkpoint thus facilitating DNA repair. Reactivated after successful DNA repair through WIP1-dependent signaling leading to CDC25A/B/C-mediated dephosphorylation and restoring cell cycle progression. Catalyzes lamin (LMNA, LMNB1 and LMNB2) phosphorylation at the onset of mitosis, promoting nuclear envelope breakdown. In proliferating cells, CDK1-mediated FOXO1 phosphorylation at the G2-M phase represses FOXO1 interaction with 14-3-3 proteins and thereby promotes FOXO1 nuclear accumulation and transcription factor activity, leading to cell death of postmitotic neurons. The phosphorylation of beta-tubulins regulates microtubule dynamics during mitosis. NEDD1 phosphorylation promotes PLK1-mediated NEDD1 phosphorylation and subsequent targeting of the gamma-tubulin ring complex (gTuRC) to the centrosome, an important step for spindle formation. In addition, CC2D1A phosphorylation regulates CC2D1A spindle pole localization and association with SCC1/RAD21 and centriole cohesion during mitosis. The phosphorylation of Bcl-xL/BCL2L1 after prolongated G2 arrest upon DNA damage triggers apoptosis. In contrast, CASP8 phosphorylation during mitosis prevents its activation by proteolysis and subsequent apoptosis. This phosphorylation occurs in cancer cell lines, as well as in primary breast tissues and lymphocytes. EZH2 phosphorylation promotes H3K27me3 maintenance and epigenetic gene silencing. CALD1 phosphorylation promotes Schwann cell migration during peripheral nerve regeneration. CDK1-cyclin-B complex phosphorylates NCKAP5L and mediates its dissociation from centrosomes during mitosis. Regulates the amplitude of the cyclic expression of the core clock gene BMAL1 by phosphorylating its transcriptional repressor NR1D1, and this phosphorylation is necessary for SCF(FBXW7)-mediated ubiquitination and proteasomal degradation of NR1D1. Phosphorylates EML3 at 'Thr-881' which is essential for its interaction with HAUS augmin-like complex and TUBG1. Phosphorylates CGAS during mitosis, leading to its inhibition, thereby preventing CGAS activation by self DNA during mitosis. Phosphorylates SKA3 during mitosis which promotes SKA3 binding to the NDC80 complex and anchoring of the SKA complex to kinetochores, to enable stable attachment of mitotic spindle microtubules to kinetochores. The sequence is that of Cyclin-dependent kinase 1 (Cdk1) from Mus musculus (Mouse).